The sequence spans 148 residues: Nucleoside diphosphate kinase (148 aa).

Residues lysine 9, phenylalanine 57, arginine 85, threonine 91, arginine 102, and asparagine 112 each contribute to the ATP site. Threonine 91 bears the Phosphothreonine mark. Histidine 115 functions as the Pros-phosphohistidine intermediate in the catalytic mechanism. A Phosphoserine modification is found at serine 122.

It belongs to the NDK family. As to quaternary structure, homotetramer. Mg(2+) serves as cofactor.

It localises to the cytoplasm. It carries out the reaction a 2'-deoxyribonucleoside 5'-diphosphate + ATP = a 2'-deoxyribonucleoside 5'-triphosphate + ADP. It catalyses the reaction a ribonucleoside 5'-diphosphate + ATP = a ribonucleoside 5'-triphosphate + ADP. Major role in the synthesis of nucleoside triphosphates other than ATP. The ATP gamma phosphate is transferred to the NDP beta phosphate via a ping-pong mechanism, using a phosphorylated active-site intermediate. The sequence is that of Nucleoside diphosphate kinase from Bacillus cereus (strain ATCC 10987 / NRS 248).